The chain runs to 358 residues: Aminomethyltransferase (358 aa).

This sequence belongs to the GcvT family. The glycine cleavage system is composed of four proteins: P, T, L and H.

It carries out the reaction N(6)-[(R)-S(8)-aminomethyldihydrolipoyl]-L-lysyl-[protein] + (6S)-5,6,7,8-tetrahydrofolate = N(6)-[(R)-dihydrolipoyl]-L-lysyl-[protein] + (6R)-5,10-methylene-5,6,7,8-tetrahydrofolate + NH4(+). Functionally, the glycine cleavage system catalyzes the degradation of glycine. This is Aminomethyltransferase from Francisella tularensis subsp. tularensis (strain FSC 198).